The chain runs to 107 residues: Anti-adapter protein IraM (107 aa).

The protein belongs to the IraM/RssC family.

It localises to the cytoplasm. In terms of biological role, inhibits RpoS proteolysis by regulating RssB activity, thereby increasing the stability of the sigma stress factor RpoS during magnesium starvation. The polypeptide is Anti-adapter protein IraM (Shigella dysenteriae serotype 1 (strain Sd197)).